The following is a 21-amino-acid chain: Japonicin-2 (21 aa).

Cys-14 and Cys-21 are joined by a disulfide.

As to expression, expressed by the skin glands.

The protein localises to the secreted. In terms of biological role, antibacterial activity against the Gram-negative bacterium E.coli and the Gram-positive bacterium S.aureus. This is Japonicin-2 from Rana japonica (Japanese reddish frog).